Reading from the N-terminus, the 599-residue chain is Elongation factor 4 (599 aa).

Residues S5–T187 form the tr-type G domain. GTP contacts are provided by residues D17 to T22 and N134 to D137.

Belongs to the TRAFAC class translation factor GTPase superfamily. Classic translation factor GTPase family. LepA subfamily.

Its subcellular location is the cell inner membrane. The enzyme catalyses GTP + H2O = GDP + phosphate + H(+). Required for accurate and efficient protein synthesis under certain stress conditions. May act as a fidelity factor of the translation reaction, by catalyzing a one-codon backward translocation of tRNAs on improperly translocated ribosomes. Back-translocation proceeds from a post-translocation (POST) complex to a pre-translocation (PRE) complex, thus giving elongation factor G a second chance to translocate the tRNAs correctly. Binds to ribosomes in a GTP-dependent manner. This is Elongation factor 4 from Cellvibrio japonicus (strain Ueda107) (Pseudomonas fluorescens subsp. cellulosa).